We begin with the raw amino-acid sequence, 211 residues long: Pyridoxine/pyridoxamine 5'-phosphate oxidase (211 aa).

Substrate is bound by residues 7–10 and Lys65; that span reads RREY. FMN-binding positions include 60–65, 75–76, Arg81, Lys82, and Gln104; these read RTVLLK and YT. Substrate contacts are provided by Tyr122, Arg126, and Ser130. Residues 139–140 and Trp184 contribute to the FMN site; that span reads QS. Substrate is bound at residue 190–192; that stretch reads RLH. Arg194 provides a ligand contact to FMN.

Belongs to the pyridoxamine 5'-phosphate oxidase family. In terms of assembly, homodimer. FMN serves as cofactor.

The enzyme catalyses pyridoxamine 5'-phosphate + O2 + H2O = pyridoxal 5'-phosphate + H2O2 + NH4(+). It carries out the reaction pyridoxine 5'-phosphate + O2 = pyridoxal 5'-phosphate + H2O2. It participates in cofactor metabolism; pyridoxal 5'-phosphate salvage; pyridoxal 5'-phosphate from pyridoxamine 5'-phosphate: step 1/1. It functions in the pathway cofactor metabolism; pyridoxal 5'-phosphate salvage; pyridoxal 5'-phosphate from pyridoxine 5'-phosphate: step 1/1. In terms of biological role, catalyzes the oxidation of either pyridoxine 5'-phosphate (PNP) or pyridoxamine 5'-phosphate (PMP) into pyridoxal 5'-phosphate (PLP). The protein is Pyridoxine/pyridoxamine 5'-phosphate oxidase of Aeromonas hydrophila subsp. hydrophila (strain ATCC 7966 / DSM 30187 / BCRC 13018 / CCUG 14551 / JCM 1027 / KCTC 2358 / NCIMB 9240 / NCTC 8049).